The chain runs to 471 residues: Ribulose bisphosphate carboxylase large chain (471 aa).

Residues asparagine 115 and threonine 165 each coordinate substrate. Residue lysine 167 is the Proton acceptor of the active site. Position 169 (lysine 169) interacts with substrate. 3 residues coordinate Mg(2+): lysine 193, aspartate 195, and glutamate 196. Residue lysine 193 is modified to N6-carboxylysine. Histidine 286 serves as the catalytic Proton acceptor. Substrate-binding residues include arginine 287, histidine 319, and serine 371.

Belongs to the RuBisCO large chain family. Type I subfamily. Heterohexadecamer of 8 large chains and 8 small chains. Requires Mg(2+) as cofactor.

It catalyses the reaction 2 (2R)-3-phosphoglycerate + 2 H(+) = D-ribulose 1,5-bisphosphate + CO2 + H2O. It carries out the reaction D-ribulose 1,5-bisphosphate + O2 = 2-phosphoglycolate + (2R)-3-phosphoglycerate + 2 H(+). RuBisCO catalyzes two reactions: the carboxylation of D-ribulose 1,5-bisphosphate, the primary event in carbon dioxide fixation, as well as the oxidative fragmentation of the pentose substrate. Both reactions occur simultaneously and in competition at the same active site. In Alvinoconcha hessleri symbiotic bacterium, this protein is Ribulose bisphosphate carboxylase large chain.